The chain runs to 379 residues: Cytochrome b (379 aa).

A run of 4 helical transmembrane segments spans residues 33-53 (LGSL…FLAM), 77-98 (WTIR…YLHI), 113-133 (WNTG…GYVL), and 178-198 (FFTL…THLL). Positions 83 and 97 each coordinate heme b. H182 and H196 together coordinate heme b. H201 contributes to the a ubiquinone binding site. 4 helical membrane-spanning segments follow: residues 226–246 (IKDI…TLLH), 288–308 (LGGV…PMTH), 320–340 (ISQC…WIGG), and 347–367 (FTTI…ILTP).

This sequence belongs to the cytochrome b family. The cytochrome bc1 complex contains 11 subunits: 3 respiratory subunits (MT-CYB, CYC1 and UQCRFS1), 2 core proteins (UQCRC1 and UQCRC2) and 6 low-molecular weight proteins (UQCRH/QCR6, UQCRB/QCR7, UQCRQ/QCR8, UQCR10/QCR9, UQCR11/QCR10 and a cleavage product of UQCRFS1). This cytochrome bc1 complex then forms a dimer. Heme b is required as a cofactor.

The protein resides in the mitochondrion inner membrane. Functionally, component of the ubiquinol-cytochrome c reductase complex (complex III or cytochrome b-c1 complex) that is part of the mitochondrial respiratory chain. The b-c1 complex mediates electron transfer from ubiquinol to cytochrome c. Contributes to the generation of a proton gradient across the mitochondrial membrane that is then used for ATP synthesis. This Bradypus tridactylus (Pale-throated three-toed sloth) protein is Cytochrome b (MT-CYB).